A 431-amino-acid polypeptide reads, in one-letter code: Pyroglutamylated RF-amide peptide receptor (431 aa).

Residues 1 to 46 (MQALNITPEQFSRLLRDHNLTREQFIALYRLRPLVYTPELPGRAKL) are Extracellular-facing. Asn-19 carries an N-linked (GlcNAc...) asparagine glycan. The chain crosses the membrane as a helical span at residues 47-67 (ALVLTGVLIFALALFGNALVF). Over 68-81 (YVVTRSKAMRTVTN) the chain is Cytoplasmic. Residues 82–102 (IFICSLALSDLLITFFCIPVT) form a helical membrane-spanning segment. At 103 to 120 (MLQNISDNWLGGAFICKM) the chain is on the extracellular side. Residues 121 to 141 (VPFVQSTAVVTEILTMTCIAV) traverse the membrane as a helical segment. Topologically, residues 142–162 (ERHQGLVHPFKMKWQYTNRRA) are cytoplasmic. The helical transmembrane segment at 163 to 183 (FTMLGVVWLVAVIVGSPMWHV) threads the bilayer. The Extracellular segment spans residues 184–212 (QQLEIKYDFLYEKEHICCLEEWTSPVHQK). A helical transmembrane segment spans residues 213–233 (IYTTFILVILFLLPLMVMLIL). The Cytoplasmic segment spans residues 234–271 (YSKIGYELWIKKRVGDGSVLRTIHGKEMSKIARKKKRA). Residues 272–292 (VIMMVTVVALFAVCWAPFHVV) form a helical membrane-spanning segment. Over 293–311 (HMMIEYSNFEKEYDDVTIK) the chain is Extracellular. Residues 312–332 (MIFAIVQIIGFSNSICNPIVY) traverse the membrane as a helical segment. The Cytoplasmic portion of the chain corresponds to 333-431 (AFMNENFKKN…AENSPLDSGH (99 aa)).

This sequence belongs to the G-protein coupled receptor 1 family. Expressed widely in the brain with high levels in the hypothalamus, trigeminal ganglia and vestibular neurons, and moderate levels in the amygdala, cortex, pituitary, hippocampus, thalamus, caudate nucleus and medulla oblongata. In peripheral tissues, expressed at high levels in the retina and at moderate levels in the heart, kidney, testis and thyroid.

It localises to the cell membrane. Receptor for the orexigenic neuropeptide QRFP. The activity of this receptor is mediated by G proteins that modulate adenylate cyclase activity and intracellular calcium levels. This Homo sapiens (Human) protein is Pyroglutamylated RF-amide peptide receptor (QRFPR).